Consider the following 663-residue polypeptide: 4-hydroxy-3-methylbut-2-en-1-yl diphosphate synthase (flavodoxin) (663 aa).

Residues C568, C571, C602, and E609 each coordinate [4Fe-4S] cluster.

It belongs to the IspG family. Requires [4Fe-4S] cluster as cofactor.

It catalyses the reaction (2E)-4-hydroxy-3-methylbut-2-enyl diphosphate + oxidized [flavodoxin] + H2O + 2 H(+) = 2-C-methyl-D-erythritol 2,4-cyclic diphosphate + reduced [flavodoxin]. Its pathway is isoprenoid biosynthesis; isopentenyl diphosphate biosynthesis via DXP pathway; isopentenyl diphosphate from 1-deoxy-D-xylulose 5-phosphate: step 5/6. In terms of biological role, converts 2C-methyl-D-erythritol 2,4-cyclodiphosphate (ME-2,4cPP) into 1-hydroxy-2-methyl-2-(E)-butenyl 4-diphosphate. This Leptospira borgpetersenii serovar Hardjo-bovis (strain L550) protein is 4-hydroxy-3-methylbut-2-en-1-yl diphosphate synthase (flavodoxin).